We begin with the raw amino-acid sequence, 395 residues long: Elongation factor Tu (395 aa).

The region spanning 10-204 (KPHVNIGTIG…AVDSYIPTPE (195 aa)) is the tr-type G domain. Residues 19-26 (GHVDHGKT) are G1. 19-26 (GHVDHGKT) contributes to the GTP binding site. Thr26 contacts Mg(2+). A G2 region spans residues 60–64 (GITIS). The tract at residues 81–84 (DCPG) is G3. GTP-binding positions include 81–85 (DCPGH) and 136–139 (NKCD). A G4 region spans residues 136 to 139 (NKCD). Residues 174–176 (SAL) are G5.

The protein belongs to the TRAFAC class translation factor GTPase superfamily. Classic translation factor GTPase family. EF-Tu/EF-1A subfamily. Monomer. In terms of processing, phosphorylated on serine and/or threonine residue(s). Dephosphorylated by stp.

It is found in the cytoplasm. It catalyses the reaction GTP + H2O = GDP + phosphate + H(+). Functionally, GTP hydrolase that promotes the GTP-dependent binding of aminoacyl-tRNA to the A-site of ribosomes during protein biosynthesis. The polypeptide is Elongation factor Tu (Listeria innocua serovar 6a (strain ATCC BAA-680 / CLIP 11262)).